A 503-amino-acid polypeptide reads, in one-letter code: ATP synthase subunit alpha (503 aa).

Residue 170–177 participates in ATP binding; sequence GDRQTGKT.

The protein belongs to the ATPase alpha/beta chains family. F-type ATPases have 2 components, CF(1) - the catalytic core - and CF(0) - the membrane proton channel. CF(1) has five subunits: alpha(3), beta(3), gamma(1), delta(1), epsilon(1). CF(0) has three main subunits: a(1), b(2) and c(9-12). The alpha and beta chains form an alternating ring which encloses part of the gamma chain. CF(1) is attached to CF(0) by a central stalk formed by the gamma and epsilon chains, while a peripheral stalk is formed by the delta and b chains.

The protein resides in the cell inner membrane. It carries out the reaction ATP + H2O + 4 H(+)(in) = ADP + phosphate + 5 H(+)(out). Its function is as follows. Produces ATP from ADP in the presence of a proton gradient across the membrane. The alpha chain is a regulatory subunit. This chain is ATP synthase subunit alpha, found in Pseudothermotoga lettingae (strain ATCC BAA-301 / DSM 14385 / NBRC 107922 / TMO) (Thermotoga lettingae).